Reading from the N-terminus, the 481-residue chain is Aspartyl/glutamyl-tRNA(Asn/Gln) amidotransferase subunit B (481 aa).

The protein belongs to the GatB/GatE family. GatB subfamily. In terms of assembly, heterotrimer of A, B and C subunits.

The catalysed reaction is L-glutamyl-tRNA(Gln) + L-glutamine + ATP + H2O = L-glutaminyl-tRNA(Gln) + L-glutamate + ADP + phosphate + H(+). It catalyses the reaction L-aspartyl-tRNA(Asn) + L-glutamine + ATP + H2O = L-asparaginyl-tRNA(Asn) + L-glutamate + ADP + phosphate + 2 H(+). Allows the formation of correctly charged Asn-tRNA(Asn) or Gln-tRNA(Gln) through the transamidation of misacylated Asp-tRNA(Asn) or Glu-tRNA(Gln) in organisms which lack either or both of asparaginyl-tRNA or glutaminyl-tRNA synthetases. The reaction takes place in the presence of glutamine and ATP through an activated phospho-Asp-tRNA(Asn) or phospho-Glu-tRNA(Gln). The protein is Aspartyl/glutamyl-tRNA(Asn/Gln) amidotransferase subunit B of Pseudomonas putida (strain W619).